The sequence spans 344 residues: Bifunctional trans-3-hydroxy-L-proline dehydratase/2-epimerase (344 aa).

The Proton acceptor role is filled by Ser90. Substrate-binding positions include 91–92 (GS), Asp252, and 257–258 (GT).

Belongs to the proline racemase family.

It carries out the reaction trans-3-hydroxy-L-proline = 1-pyrroline-2-carboxylate + H2O. The enzyme catalyses trans-3-hydroxy-L-proline = cis-3-hydroxy-D-proline. Its function is as follows. Bifunctional enzyme catalyzing both the dehydration of trans-3-hydroxy-L-proline (t3LHyp) to Delta(1)-pyrroline-2-carboxylate (Pyr2C) and 2-epimerization of t3LHyp to cis-3-hydroxy-D-proline (c3DHyp). No dehydratase activity with L-proline, trans-4-hydroxy-L-proline (t4LHyp), cis-4-hydroxy-L-proline (c4LHyp), D-proline, cis-4-hydroxy-D-proline (c4DHyp), trans-4-hydroxy-D-proline (t4DHyp) or L-serine as substrates. Displays neither t4LHyp epimerase nor proline racemase activity. Is likely involved in a degradation pathway that converts t3LHyp to L-proline, which would allow P.aeruginosa to grow on t3LHyp as a sole carbon source. The polypeptide is Bifunctional trans-3-hydroxy-L-proline dehydratase/2-epimerase (Pseudomonas aeruginosa (strain ATCC 15692 / DSM 22644 / CIP 104116 / JCM 14847 / LMG 12228 / 1C / PRS 101 / PAO1)).